A 335-amino-acid chain; its full sequence is MAAGAAEAAVAAVEEVGSAGQFEELLRLKAKSLLVVHFWAPWAPQCAQMNEVMAELAKELPQVSFVKLEAEGVPEVSEKYEISSVPTFLFFKNSQKIDRLDGAHAPELTKKVQRHASSGSFLPSANEHLKEDLNLRLKKLTHAAPCMLFMKGTPQEPRCGFSKQMVEILHKHNIQFSSFDIFSDEEVRQGLKAYSSWPTYPQLYVSGELIGGLDIIKELEASEELDTICPKAPKLEERLKVLTNKASVMLFMKGNKQEAKCGFSKQILEILNSTGVEYETFDILEDEEVRQGLKAYSNWPTYPQLYVKGELVGGLDIVKELKENGELLPILRGEN.

Residue alanine 2 is modified to N-acetylalanine. A Thioredoxin domain is found at 2–117 (AAGAAEAAVA…LTKKVQRHAS (116 aa)). 2 positions are modified to phosphoserine: serine 117 and serine 120. 2 Glutaredoxin domains span residues 144–236 (APCM…PKLE) and 237–335 (ERLK…RGEN). [2Fe-2S] cluster contacts are provided by cysteine 159 and cysteine 261.

In terms of assembly, homodimer; the homodimer is independent of 2Fe-2S clusters. Heterotrimer; forms a heterotrimeric complex composed by two BOLA2 molecules and one GLRX3 molecule; linked by [2Fe-2S] clusters. Interacts (via N-terminus) with PRKCQ/PKC-theta. Interacts (via C-terminus) with CSRP3. Interacts with CSRP2. As to expression, expressed in heart, spleen, testis and, to a lower extent, in thymus and peripheral blood leukocytes. Weakly expressed in lung, placenta, colon and small intestine.

The protein localises to the cytoplasm. It is found in the cytosol. The protein resides in the cell cortex. It localises to the myofibril. Its subcellular location is the sarcomere. The protein localises to the z line. In terms of biological role, together with BOLA2, acts as a cytosolic iron-sulfur (Fe-S) cluster assembly factor that facilitates [2Fe-2S] cluster insertion into a subset of cytosolic proteins. Acts as a critical negative regulator of cardiac hypertrophy and a positive inotropic regulator. Required for hemoglobin maturation. Does not possess any thyoredoxin activity since it lacks the conserved motif that is essential for catalytic activity. In Homo sapiens (Human), this protein is Glutaredoxin-3 (GLRX3).